We begin with the raw amino-acid sequence, 396 residues long: Anticodon nuclease (396 aa).

Anticodon endonuclease (ACNase) that triggers the cleavage ligation of tRNA(Lys). It is activated by T4 stp protein and masked by the prrD protein (the endonuclease subunit of EcoprrI). The prr locus restricts phage T4 mutants lacking polynucleotide kinase or RNA ligase; T4 mutants lacking these genes manifest a T4-induced anticodon nuclease (ACNase). It is thought that Stp and other T4-encoded ACNase factors counteract the masking agents, thus activating the latent ACNase. This chain is Anticodon nuclease, found in Escherichia coli.